We begin with the raw amino-acid sequence, 416 residues long: Phosphoglycerate kinase (416 aa).

(2R)-3-phosphoglycerate is bound by residues V23, D24, F25, N26, Q38, R39, S62, H63, G65, R66, L121, R122, H168, and R169. G212 is a binding site for ADP. G212 provides a ligand contact to CDP. Residues A213 and K214 each contribute to the AMP site. Residue A213 coordinates ATP. A213 lines the Mg(2+) pocket. The Mg(2+) site is built by A216 and D217. D217 lines the CDP pocket. AMP is bound at residue K218. ATP is bound at residue K218. G236 is an ADP binding site. G236 is a CDP binding site. The AMP site is built by G237 and G311. 2 residues coordinate ATP: G237 and G311. Positions 336 and 341 each coordinate CDP. Residue F341 participates in ADP binding. Residue E342 participates in AMP binding. ATP-binding residues include E342, D373, and T374. Residue D373 coordinates Mg(2+).

The protein belongs to the phosphoglycerate kinase family. In terms of assembly, monomer. Requires Mg(2+) as cofactor.

The protein resides in the cytoplasm. It localises to the mitochondrion. The enzyme catalyses (2R)-3-phosphoglycerate + ATP = (2R)-3-phospho-glyceroyl phosphate + ADP. It participates in carbohydrate degradation; glycolysis; pyruvate from D-glyceraldehyde 3-phosphate: step 2/5. Catalyzes one of the two ATP producing reactions in the glycolytic pathway via the reversible conversion of 1,3-diphosphoglycerate to 3-phosphoglycerate. Both L- and D- forms of purine and pyrimidine nucleotides can be used as substrates, but the activity is much lower on pyrimidines. Negatively regulates the biosynthesis of acetyl-CoA from pyruvate in the mitochondrion. This chain is Phosphoglycerate kinase (PGK1), found in Candida glabrata (strain ATCC 2001 / BCRC 20586 / JCM 3761 / NBRC 0622 / NRRL Y-65 / CBS 138) (Yeast).